The sequence spans 86 residues: Neuropeptide-like 3 (86 aa).

An N-terminal signal peptide occupies residues 1–16; the sequence is MFKLCVFVALLSLAAA. 2 propeptides span residues 17-50 and 63-75; these read APAPAPAPGLIAPGLVAPGIWGPTVVGSPLVAPQ and AITQVHPSPLLIK. At isoleucine 85 the chain carries Isoleucine amide.

It localises to the secreted. This is Neuropeptide-like 3 (Nplp3) from Drosophila yakuba (Fruit fly).